Here is a 1200-residue protein sequence, read N- to C-terminus: SR-related and CTD-associated factor 4 (1200 aa).

One can recognise a CID domain in the interval 1–139; sequence MDAVNAFNQE…PLLDMAAGTS (139 aa). At Lys-49 the chain carries N6-acetyllysine. Over residues 140 to 153 the composition is skewed to polar residues; it reads NAAPGAENVTNNEG. 3 disordered regions span residues 140–172, 299–324, and 346–566; these read NAAP…PTNS, VPAS…MQQP, and SMQH…QIKS. Ser-154 bears the Phosphoserine mark. 2 stretches are compositionally biased toward pro residues: residues 367–390 and 399–461; these read APPP…PGMP and LPQP…PPVQ. The span at 462–471 shows a compositional bias: low complexity; that stretch reads PTFQPTFQPQ. The segment covering 493–503 has biased composition (basic and acidic residues); it reads EVKRHVPESRK. Over residues 504–541 the composition is skewed to basic residues; that stretch reads SRSRSPKRRRSRSGSRSRRSRHRRSRSRSRDRRRHSPR. Residues 543-558 are compositionally biased toward basic and acidic residues; it reads RSQERRDREKERERRQ. Positions 574–648 constitute an RRM domain; the sequence is TTLWVGQLDK…KSIKIAWALN (75 aa). Disordered regions lie at residues 696–724, 834–875, and 927–1200; these read WKGI…VSPI, VSGA…SLLG, and PPHM…EAPR. Ser-722 bears the Phosphoserine mark. Pro residues-rich tracts occupy residues 856–868 and 927–958; these read PAAP…PPVT and PPHM…PPHG. Positions 965-978 are enriched in gly residues; that stretch reads GMPGLGGPGPGPGG. Positions 986–1036 are enriched in low complexity; that stretch reads QQQPQQQQQQQQQQQQQQQQQQQQPPPQQSQTQQQPAPSQQPAPAQQQPQQ. A Phosphoserine modification is found at Ser-1058. Positions 1063 to 1139 are enriched in basic and acidic residues; that stretch reads VENDRERYGS…RGKEKHEVAD (77 aa). A compositionally biased stretch (polar residues) spans 1153-1162; it reads QVGNTDTVSE. The residue at position 1178 (Ser-1178) is a Phosphoserine.

As to quaternary structure, interacts with POLR2A; via C-terminal heptapeptide repeat domain (CTD) phosphorylated at 'Ser-2' and 'Ser-5'.

Its subcellular location is the nucleus. In terms of biological role, anti-terminator protein required to prevent early mRNA termination during transcription. Together with SCAF8, acts by suppressing the use of early, alternative poly(A) sites, thereby preventing the accumulation of non-functional truncated proteins. Mechanistically, associates with the phosphorylated C-terminal heptapeptide repeat domain (CTD) of the largest RNA polymerase II subunit (POLR2A), and subsequently binds nascent RNA upstream of early polyadenylation sites to prevent premature mRNA transcript cleavage and polyadenylation. Independently of SCAF8, also acts as a suppressor of transcriptional readthrough. In Rattus norvegicus (Rat), this protein is SR-related and CTD-associated factor 4.